Reading from the N-terminus, the 542-residue chain is Hydroxylamine reductase (542 aa).

The [4Fe-4S] cluster site is built by cysteine 3, cysteine 6, cysteine 15, and cysteine 21. Positions 238, 262, 307, 398, 426, 451, 485, and 487 each coordinate hybrid [4Fe-2O-2S] cluster. A Cysteine persulfide modification is found at cysteine 398.

This sequence belongs to the HCP family. It depends on [4Fe-4S] cluster as a cofactor. Hybrid [4Fe-2O-2S] cluster serves as cofactor.

The protein resides in the cytoplasm. It catalyses the reaction A + NH4(+) + H2O = hydroxylamine + AH2 + H(+). Its function is as follows. Catalyzes the reduction of hydroxylamine to form NH(3) and H(2)O. The chain is Hydroxylamine reductase from Microcystis aeruginosa (strain NIES-843 / IAM M-2473).